The primary structure comprises 151 residues: MKNVIIYTDGACRGNPGPGGWGAILLYGDKEKELFGGEPETTNNRMELMAAIVALETLNTPCQVVLTTDSKYVMDGITQWMANWKKRGWKTASKQPVKNVDLWQRLDAAVQRHDIDWQWVKGHSGHPGNERADALANRGIDEMKHKQGQAS.

One can recognise an RNase H type-1 domain in the interval methionine 1 to aspartate 141. 4 residues coordinate Mg(2+): aspartate 9, glutamate 47, aspartate 69, and aspartate 133.

It belongs to the RNase H family. Monomer. The cofactor is Mg(2+).

The protein localises to the cytoplasm. The catalysed reaction is Endonucleolytic cleavage to 5'-phosphomonoester.. Functionally, endonuclease that specifically degrades the RNA of RNA-DNA hybrids. The protein is Ribonuclease H of Alcanivorax borkumensis (strain ATCC 700651 / DSM 11573 / NCIMB 13689 / SK2).